A 92-amino-acid chain; its full sequence is Long neurotoxin 1 (92 aa).

A signal peptide spans 1 to 21; the sequence is MKTLLLTLVVVTIVCLDLGYT. 4 disulfide bridges follow: C24–C42, C35–C63, C67–C79, and C80–C85.

The protein belongs to the three-finger toxin family. Long-chain subfamily. Type II alpha-neurotoxin sub-subfamily. As to expression, expressed by the venom gland.

The protein resides in the secreted. Functionally, binds with high affinity to muscular (alpha-1/CHRNA1) and neuronal (alpha-7/CHRNA7) nicotinic acetylcholine receptor (nAChR) and inhibits acetylcholine from binding to the receptor, thereby impairing neuromuscular and neuronal transmission. The chain is Long neurotoxin 1 from Oxyuranus scutellatus scutellatus (Australian taipan).